Here is a 686-residue protein sequence, read N- to C-terminus: Probable metal-nicotianamine transporter YSL4 (686 aa).

A run of 14 helical transmembrane segments spans residues 27 to 47, 53 to 73, 96 to 116, 151 to 171, 203 to 223, 264 to 284, 308 to 328, 373 to 393, 405 to 425, 441 to 461, 488 to 508, 554 to 574, 596 to 616, and 629 to 649; these read WLVT…FCFV, MMTG…FFLL, MFLI…GFAT, FFLI…IMII, VMTI…QWFY, IVNF…YPYL, VFIS…ILVT, IPMF…MVAM, VGVL…ATGL, IFAA…VSGI, AMIA…PCIF, CVEL…LVLV, FFAG…LLLW, and AAVA…SALL.

The protein belongs to the YSL (TC 2.A.67.2) family.

The protein resides in the membrane. May be involved in the transport of nicotianamine-chelated metals. This chain is Probable metal-nicotianamine transporter YSL4 (YSL4), found in Oryza sativa subsp. japonica (Rice).